We begin with the raw amino-acid sequence, 330 residues long: MSRKEELYDITIIGGGPTGLFAAFYGGMRQAKVKIIESMPQLGGQLAALYPEKYIYDVAGFPKVKAQDLVNDLKRQAEQFNPTIALEQSVQNVTKETDDTFTIKTDKETHYSKAIIITAGAGAFQPRRLEVEGAKQYEGKNLQYFVNDLNAYAGKNVLISGGGDSAVDWALMLEPVAKNVTLIHRRDKFRAHEHSVELLQKSSVNILTPFAISELSGDGEKIHHVTIQEVKGDAVETLDVDEVIVNFGFVSSLGPIKGWGLEIEKNSIVVNTKMETNIPGIYAAGDICTYPGKVKLIATGFGEAPTAVNNAKAFIDPTARVFPGHSTSLF.

Positions 18, 37, 45, 50, 90, 124, 286, and 327 each coordinate FAD.

The protein belongs to the ferredoxin--NADP reductase type 2 family. Homodimer. FAD is required as a cofactor.

It catalyses the reaction 2 reduced [2Fe-2S]-[ferredoxin] + NADP(+) + H(+) = 2 oxidized [2Fe-2S]-[ferredoxin] + NADPH. This Halalkalibacterium halodurans (strain ATCC BAA-125 / DSM 18197 / FERM 7344 / JCM 9153 / C-125) (Bacillus halodurans) protein is Ferredoxin--NADP reductase.